We begin with the raw amino-acid sequence, 211 residues long: Thymidylate kinase (211 aa).

7-14 contacts ATP; sequence GIDGCGKT.

This sequence belongs to the thymidylate kinase family.

It carries out the reaction dTMP + ATP = dTDP + ADP. In terms of biological role, phosphorylation of dTMP to form dTDP in both de novo and salvage pathways of dTTP synthesis. The protein is Thymidylate kinase of Anaplasma marginale (strain St. Maries).